Reading from the N-terminus, the 89-residue chain is Large ribosomal subunit protein bL28 (89 aa).

Belongs to the bacterial ribosomal protein bL28 family.

The protein is Large ribosomal subunit protein bL28 of Chlamydia pneumoniae (Chlamydophila pneumoniae).